Reading from the N-terminus, the 173-residue chain is Alpha-crystallin A chain (173 aa).

Methionine 1 carries the post-translational modification N-acetylmethionine. The interval 1 to 63 (MDIAIQHPWF…RTVLDSGISE (63 aa)) is required for complex formation with BFSP1 and BFSP2. A Deamidated glutamine; partial modification is found at glutamine 6. Serine 45 is subject to Phosphoserine. Glutamine 50 is modified (deamidated glutamine; partial). A sHSP domain is found at 52–162 (LFRTVLDSGI…GHSERAIPVS (111 aa)). Lysine 70 carries the N6-acetyllysine modification. Glutamine 90 carries the deamidated glutamine; partial modification. At lysine 99 the chain carries N6-acetyllysine. Histidine 100 is a Zn(2+) binding site. The residue at position 101 (asparagine 101) is a Deamidated asparagine; partial. Residues glutamate 102 and histidine 107 each contribute to the Zn(2+) site. Phosphoserine is present on serine 122. A Deamidated asparagine; partial modification is found at asparagine 123. Residues 144 to 173 (PKIPSGMDAGHSERAIPVSREEKPGSAPSS) form a disordered region. A compositionally biased stretch (basic and acidic residues) spans 153–167 (GHSERAIPVSREEKP). Residue histidine 154 participates in Zn(2+) binding. Serine 162 carries an O-linked (GlcNAc) serine glycan.

This sequence belongs to the small heat shock protein (HSP20) family. In terms of assembly, heteromer composed of three CRYAA and one CRYAB subunits. Inter-subunit bridging via zinc ions enhances stability, which is crucial as there is no protein turn over in the lens. Can also form homodimers and homotetramers (dimers of dimers) which serve as the building blocks of homooligomers. Within homooligomers, the zinc-binding motif is created from residues of 3 different molecules. His-100 and Glu-102 from one molecule are ligands of the zinc ion, and His-107 and His-154 residues from additional molecules complete the site with tetrahedral coordination geometry. Part of a complex required for lens intermediate filament formation composed of BFSP1, BFSP2 and CRYAA. Post-translationally, acetylation at Lys-70 may increase chaperone activity. In terms of processing, undergoes age-dependent proteolytical cleavage at the C-terminus.

It localises to the cytoplasm. Its subcellular location is the nucleus. Functionally, contributes to the transparency and refractive index of the lens. Acts as a chaperone, preventing aggregation of various proteins under a wide range of stress conditions. Required for the correct formation of lens intermediate filaments as part of a complex composed of BFSP1, BFSP2 and CRYAA. The chain is Alpha-crystallin A chain (CRYAA) from Equus caballus (Horse).